The following is a 441-amino-acid chain: MKMKILLIGGGGREHAIAEGIKESKHNPILYALMAKKNPGIAALCEDFLLEKETEVEKIVEYAKARNIEMAFVGPEAPLAAGVADALWEAGIPVVGPKKACAVIEFDKAWARNFMKKYGIEGCPAYEVFTEEAPAHAFIEKLGDVAVKPSGLTGGKGVKVMGDQLPDLKAAKDYTSELLEKGPVVIEERFIGEEFTLQAFVDGKNLAFFPAVQDHKRAYEGDLGPNTGGMGSYTDAGEILPFMLAGDIEQAKKIMQHTVTALHEETGTGYQGVLYGQFILTASGPKVVEFNARFGDPEAMNVIPLIETDFTEIMSAVVKSTLDSLPVKFSRKATVCKYAVPAGYPDNPEKDSEVLVGDVGEASVYYASVYEKEGKIYTTGSRAVAVVGRAETIDAAEKIAQNALENIQGKLFFRKDIGTASLIQKRIDHMKELRGGLSQKQ.

In terms of domain architecture, ATP-grasp spans Arg-112 to Lys-319. Ile-139–Thr-196 is a binding site for ATP. The Mg(2+) site is built by Gln-277, Glu-289, and Asn-291. Mn(2+) contacts are provided by Gln-277, Glu-289, and Asn-291.

It belongs to the GARS family. Mg(2+) is required as a cofactor. Requires Mn(2+) as cofactor.

The catalysed reaction is 5-phospho-beta-D-ribosylamine + glycine + ATP = N(1)-(5-phospho-beta-D-ribosyl)glycinamide + ADP + phosphate + H(+). The protein operates within purine metabolism; IMP biosynthesis via de novo pathway; N(1)-(5-phospho-D-ribosyl)glycinamide from 5-phospho-alpha-D-ribose 1-diphosphate: step 2/2. The protein is Phosphoribosylamine--glycine ligase of Methanosarcina acetivorans (strain ATCC 35395 / DSM 2834 / JCM 12185 / C2A).